Reading from the N-terminus, the 348-residue chain is UDP-3-O-acylglucosamine N-acyltransferase (348 aa).

His-241 functions as the Proton acceptor in the catalytic mechanism.

This sequence belongs to the transferase hexapeptide repeat family. LpxD subfamily. As to quaternary structure, homotrimer.

It catalyses the reaction a UDP-3-O-[(3R)-3-hydroxyacyl]-alpha-D-glucosamine + a (3R)-hydroxyacyl-[ACP] = a UDP-2-N,3-O-bis[(3R)-3-hydroxyacyl]-alpha-D-glucosamine + holo-[ACP] + H(+). The protein operates within bacterial outer membrane biogenesis; LPS lipid A biosynthesis. In terms of biological role, catalyzes the N-acylation of UDP-3-O-acylglucosamine using 3-hydroxyacyl-ACP as the acyl donor. Is involved in the biosynthesis of lipid A, a phosphorylated glycolipid that anchors the lipopolysaccharide to the outer membrane of the cell. The sequence is that of UDP-3-O-acylglucosamine N-acyltransferase from Neisseria meningitidis serogroup C (strain 053442).